The sequence spans 336 residues: Aldo-keto reductase str7 (336 aa).

Residue Asp57 coordinates NADP(+). Tyr62 serves as the catalytic Proton donor. Substrate is bound at residue His124. NADP(+)-binding positions include 154-155 (SE), Gln174, 206-220 (SPLG…YKSP), and 283-291 (KKIKYLEEN).

The protein belongs to the aldo/keto reductase family. Aldo/keto reductase 2 subfamily.

It functions in the pathway mycotoxin biosynthesis. Functionally, aldo-keto reductase; part of the gene cluster that mediates the biosynthesis of strobilurin A, an antifungal polyketide that contains a key beta-methoxyacrylate toxophore that targets the complex III of the mitochondrial electron transport chain. Strobilurin biosynthesis begins with construction of benzoyl CoA by step-wise elimination of ammonia from phenylalanine by the phenylalanine ammonia-lyase str11, oxygenation by str8 and retro-Claisen reaction to form benzoic acid, which is activated to its CoA thiolester benzoyl CoA by the dedicated CoA ligase str10. Benzoyl CoA forms the starter unit for the highly reducing polyketide synthase stpks1 that produces the polyketide prestrobilutin A. The FAD-dependent oxygenase str9 then catalyzes the key oxidative rearrangement responsible for the creation of the beta-methoxyacrylate toxophore. Str9 performs epoxidation of the 2,3 olefin of prestrobilutin A, followed by Meinwald rearrangement to furnish the aldehyde intermediate. Rapid enolization of the aldehyde intermediate would give the beta-methoxyacrylate skeleton and methylations catalyzed by str2 and str3 complete the synthesis and lead to the production of strobilurin A. The short-chain dehydrogenase stl2 and the dehydrogenase str4 play a role in the shunt pathway leading to the production of bolineol. The cluster encodes no obvious halogenase gene that could be involved in production of strobilurin B, nor any obvious dimethylallyl-transferase that could be involved in the production of strobilurin G. It is possible that unknown proteins encoded in, or near, the cluster (such as str1 or stl1) may form new classes of halogenases or dimethylally-transferases, or that the responsible genes are located elsewhere on the genome. Similarly, proteins encoded by str5/str6 hydrolases appear to have no chemical role in the biosynthesis of strobilurin A. Finally, no obvious self-resistance gene is found within the cluster. In Strobilurus tenacellus, this protein is Aldo-keto reductase str7.